The sequence spans 235 residues: Intron-encoded endonuclease I-SceI (235 aa).

The protein belongs to the LAGLIDADG endonuclease family. Monomer. It depends on Mg(2+) as a cofactor.

Its subcellular location is the mitochondrion. Functionally, mitochondrial DNA endonuclease involved in intron homing. It introduces a specific double-strand break in the DNA of the 21S rRNA gene and thus mediates the insertion of an intron, containing its own coding sequence (group I intron), into an intronless gene. Specifically recognizes and cleaves the sequence 5'-TAGGGATAACAGGGTAAT-3'. This is Intron-encoded endonuclease I-SceI (SCEI) from Saccharomyces cerevisiae (strain ATCC 204508 / S288c) (Baker's yeast).